Reading from the N-terminus, the 289-residue chain is Type III pantothenate kinase (289 aa).

9–16 (DAGNSRVK) contacts ATP. Substrate is bound by residues Y106 and 113–116 (GSDR). The Proton acceptor role is filled by D115. Residue T139 participates in ATP binding. T209 is a substrate binding site.

The protein belongs to the type III pantothenate kinase family. Homodimer. NH4(+) is required as a cofactor. Requires K(+) as cofactor.

The protein localises to the cytoplasm. The catalysed reaction is (R)-pantothenate + ATP = (R)-4'-phosphopantothenate + ADP + H(+). The protein operates within cofactor biosynthesis; coenzyme A biosynthesis; CoA from (R)-pantothenate: step 1/5. Its function is as follows. Catalyzes the phosphorylation of pantothenate (Pan), the first step in CoA biosynthesis. The chain is Type III pantothenate kinase from Paraburkholderia phymatum (strain DSM 17167 / CIP 108236 / LMG 21445 / STM815) (Burkholderia phymatum).